Reading from the N-terminus, the 155-residue chain is 3-hydroxyacyl-[acyl-carrier-protein] dehydratase FabZ (155 aa).

His-54 is an active-site residue.

The protein belongs to the thioester dehydratase family. FabZ subfamily.

It is found in the cytoplasm. It carries out the reaction a (3R)-hydroxyacyl-[ACP] = a (2E)-enoyl-[ACP] + H2O. Functionally, involved in unsaturated fatty acids biosynthesis. Catalyzes the dehydration of short chain beta-hydroxyacyl-ACPs and long chain saturated and unsaturated beta-hydroxyacyl-ACPs. In Burkholderia ambifaria (strain MC40-6), this protein is 3-hydroxyacyl-[acyl-carrier-protein] dehydratase FabZ.